The following is a 634-amino-acid chain: Factor of DNA methylation 5 (634 aa).

Residues 254 to 469 are a coiled coil; that stretch reads IVVDDLANKI…EDTNSALMVK (216 aa).

In terms of biological role, acts in association with FDM3 and FDM4 for RNA-directed DNA methylation (RdDM). The protein is Factor of DNA methylation 5 of Arabidopsis thaliana (Mouse-ear cress).